The sequence spans 574 residues: Proline--tRNA ligase (574 aa).

Belongs to the class-II aminoacyl-tRNA synthetase family. ProS type 1 subfamily. As to quaternary structure, homodimer.

It is found in the cytoplasm. The enzyme catalyses tRNA(Pro) + L-proline + ATP = L-prolyl-tRNA(Pro) + AMP + diphosphate. Its function is as follows. Catalyzes the attachment of proline to tRNA(Pro) in a two-step reaction: proline is first activated by ATP to form Pro-AMP and then transferred to the acceptor end of tRNA(Pro). As ProRS can inadvertently accommodate and process non-cognate amino acids such as alanine and cysteine, to avoid such errors it has two additional distinct editing activities against alanine. One activity is designated as 'pretransfer' editing and involves the tRNA(Pro)-independent hydrolysis of activated Ala-AMP. The other activity is designated 'posttransfer' editing and involves deacylation of mischarged Ala-tRNA(Pro). The misacylated Cys-tRNA(Pro) is not edited by ProRS. This Aeromonas hydrophila subsp. hydrophila (strain ATCC 7966 / DSM 30187 / BCRC 13018 / CCUG 14551 / JCM 1027 / KCTC 2358 / NCIMB 9240 / NCTC 8049) protein is Proline--tRNA ligase.